Consider the following 513-residue polypeptide: Na(+)/H(+) antiporter NhaB (513 aa).

The next 11 membrane-spanning stretches (helical) occupy residues 21-41 (LCII…SPFI), 43-63 (GWTL…CYPL), 88-108 (IIAN…IYFM), 137-157 (AAFL…ISVG), 202-222 (LLMH…VGEP), 235-255 (FIEF…CGIA), 299-318 (MAIQ…LHLA), 322-344 (IIGL…HAIG), 350-370 (PMPF…IVDL), 389-409 (LALF…VFVG), and 477-497 (MALP…EYLL).

This sequence belongs to the NhaB Na(+)/H(+) (TC 2.A.34) antiporter family.

Its subcellular location is the cell inner membrane. The enzyme catalyses 2 Na(+)(in) + 3 H(+)(out) = 2 Na(+)(out) + 3 H(+)(in). Na(+)/H(+) antiporter that extrudes sodium in exchange for external protons. The chain is Na(+)/H(+) antiporter NhaB from Haemophilus ducreyi (strain 35000HP / ATCC 700724).